The primary structure comprises 185 residues: Ribosome-recycling factor (185 aa).

Belongs to the RRF family.

Its subcellular location is the cytoplasm. In terms of biological role, responsible for the release of ribosomes from messenger RNA at the termination of protein biosynthesis. May increase the efficiency of translation by recycling ribosomes from one round of translation to another. This is Ribosome-recycling factor from Bacillus cytotoxicus (strain DSM 22905 / CIP 110041 / 391-98 / NVH 391-98).